Reading from the N-terminus, the 713-residue chain is Nuclear poly(A) polymerase 1 (713 aa).

Residues 91-93 (FGS), 103-106 (ADID), D159, Y229, and 238-239 (GI) each bind ATP. Mg(2+)-binding residues include D104, D106, and D159. Residues 480-555 (FVFPGGVRPS…TLTDQPRNSK (76 aa)) are disordered. A compositionally biased stretch (low complexity) spans 507 to 526 (SSTSSAPAATTTTTEMSSES).

This sequence belongs to the poly(A) polymerase family. In terms of assembly, monomer. Forms a complex with cleavage and polyadenylation specificity factor (CPSF) subunit PAPS4. Mg(2+) serves as cofactor. It depends on Mn(2+) as a cofactor. In terms of tissue distribution, expressed in stems, cotyledons, hypocotyls, radicle, leaves, and, to a lower extent, in roots (including primary and secondary roots as well as root tips) and flowers. In radicle, roots and leaves, mainly present in vascular tissues.

The protein resides in the nucleus. It catalyses the reaction RNA(n) + ATP = RNA(n)-3'-adenine ribonucleotide + diphosphate. In terms of biological role, essential protein. Polymerase that creates the 3'-poly(A) tail of mRNA's. Also required for the endoribonucleolytic cleavage reaction at some polyadenylation sites. May acquire specificity through interaction with a cleavage and polyadenylation specificity factor (CPSF) at its C-terminus. The sequence is that of Nuclear poly(A) polymerase 1 from Arabidopsis thaliana (Mouse-ear cress).